Consider the following 258-residue polypeptide: Regulatory protein RecX (258 aa).

It belongs to the RecX family.

The protein localises to the cytoplasm. In terms of biological role, modulates RecA activity. The sequence is that of Regulatory protein RecX from Streptococcus sanguinis (strain SK36).